Reading from the N-terminus, the 432-residue chain is Glutamate-1-semialdehyde 2,1-aminomutase (432 aa).

Residue Lys-272 is modified to N6-(pyridoxal phosphate)lysine.

It belongs to the class-III pyridoxal-phosphate-dependent aminotransferase family. HemL subfamily. In terms of assembly, homodimer. Pyridoxal 5'-phosphate serves as cofactor.

It is found in the cytoplasm. It carries out the reaction (S)-4-amino-5-oxopentanoate = 5-aminolevulinate. It participates in porphyrin-containing compound metabolism; protoporphyrin-IX biosynthesis; 5-aminolevulinate from L-glutamyl-tRNA(Glu): step 2/2. The protein operates within porphyrin-containing compound metabolism; chlorophyll biosynthesis. The protein is Glutamate-1-semialdehyde 2,1-aminomutase of Cyanothece sp. (strain PCC 7425 / ATCC 29141).